A 274-amino-acid polypeptide reads, in one-letter code: MFEKITEQPSLYDRLEEKSTREILEDINREDRKVAEAVSRTIPMIERLVEQIIPRMEQGGRLFYMGAGTSGRLGVLDASEIPPTFGMPPTFVIGLIAGGDRALRNPVEKAEDNTERGWEELLSHGVNSSDTVIGIAASGTTPYVIGALREARRHGILTGCICSNIESPLAAEADCPIEVIVGPEYVTGSSRMKSGTAQKMILNMISTSIMIRLGRVKGNRMVNMQLSNNKLIDRGTRMLMSEFDLSYEDARTLLLRYGSVRIASESMKQKPPKK.

The 164-residue stretch at 52-215 (IIPRMEQGGR…STSIMIRLGR (164 aa)) folds into the SIS domain. Catalysis depends on E80, which acts as the Proton donor. The active site involves E111.

It belongs to the GCKR-like family. MurNAc-6-P etherase subfamily. In terms of assembly, homodimer.

It carries out the reaction N-acetyl-D-muramate 6-phosphate + H2O = N-acetyl-D-glucosamine 6-phosphate + (R)-lactate. Its pathway is amino-sugar metabolism; N-acetylmuramate degradation. Functionally, specifically catalyzes the cleavage of the D-lactyl ether substituent of MurNAc 6-phosphate, producing GlcNAc 6-phosphate and D-lactate. The sequence is that of N-acetylmuramic acid 6-phosphate etherase from Porphyromonas gingivalis (strain ATCC BAA-308 / W83).